The primary structure comprises 62 residues: Photosystem II reaction center protein Z (62 aa).

2 helical membrane-spanning segments follow: residues 8–28 and 41–61; these read AVFA…VVFA and FSGT…NSLI.

The protein belongs to the PsbZ family. PSII is composed of 1 copy each of membrane proteins PsbA, PsbB, PsbC, PsbD, PsbE, PsbF, PsbH, PsbI, PsbJ, PsbK, PsbL, PsbM, PsbT, PsbY, PsbZ, Psb30/Ycf12, at least 3 peripheral proteins of the oxygen-evolving complex and a large number of cofactors. It forms dimeric complexes.

The protein localises to the plastid. It is found in the chloroplast thylakoid membrane. May control the interaction of photosystem II (PSII) cores with the light-harvesting antenna, regulates electron flow through the 2 photosystem reaction centers. PSII is a light-driven water plastoquinone oxidoreductase, using light energy to abstract electrons from H(2)O, generating a proton gradient subsequently used for ATP formation. The polypeptide is Photosystem II reaction center protein Z (Nymphaea alba (White water-lily)).